Reading from the N-terminus, the 220-residue chain is Octanoyltransferase (220 aa).

The region spanning 31 to 206 (DDTPDEVWLV…ELVTLLDYEQ (176 aa)) is the BPL/LPL catalytic domain. Residues 70-77 (RGGQVTYH), 137-139 (SLG), and 150-152 (GLA) contribute to the substrate site. Cys168 serves as the catalytic Acyl-thioester intermediate.

It belongs to the LipB family.

It is found in the cytoplasm. The enzyme catalyses octanoyl-[ACP] + L-lysyl-[protein] = N(6)-octanoyl-L-lysyl-[protein] + holo-[ACP] + H(+). Its pathway is protein modification; protein lipoylation via endogenous pathway; protein N(6)-(lipoyl)lysine from octanoyl-[acyl-carrier-protein]: step 1/2. In terms of biological role, catalyzes the transfer of endogenously produced octanoic acid from octanoyl-acyl-carrier-protein onto the lipoyl domains of lipoate-dependent enzymes. Lipoyl-ACP can also act as a substrate although octanoyl-ACP is likely to be the physiological substrate. This is Octanoyltransferase from Vibrio campbellii (strain ATCC BAA-1116).